We begin with the raw amino-acid sequence, 466 residues long: Asparagine--tRNA ligase (466 aa).

It belongs to the class-II aminoacyl-tRNA synthetase family. In terms of assembly, homodimer.

The protein localises to the cytoplasm. It catalyses the reaction tRNA(Asn) + L-asparagine + ATP = L-asparaginyl-tRNA(Asn) + AMP + diphosphate + H(+). This is Asparagine--tRNA ligase from Idiomarina loihiensis (strain ATCC BAA-735 / DSM 15497 / L2-TR).